The chain runs to 557 residues: Arginine--tRNA ligase (557 aa).

A 'HIGH' region motif is present at residues 132–142 (ANPTGNLHLGH).

Belongs to the class-I aminoacyl-tRNA synthetase family. In terms of assembly, monomer.

Its subcellular location is the cytoplasm. The enzyme catalyses tRNA(Arg) + L-arginine + ATP = L-arginyl-tRNA(Arg) + AMP + diphosphate. In Geobacillus thermodenitrificans (strain NG80-2), this protein is Arginine--tRNA ligase.